Consider the following 829-residue polypeptide: MEARYNFKEIEPKWQRRWEASDLYRVTEDPDKPKFYCLEMFPYPSGNLHMGHVRNYSIGDVVARVKRMRGYNVLHPMGWDAFGLPAENAAIHRGIPPAEWTWSNIANMRRQLHAMGISYDWDREVATCHPNYYRWTQWLFLQMYKHGLAYRKKAAVNWCPSCATVLANEQVVDGACERCHTPVMRKDLEQWFFRITDYADRLLEDLKKLPGWPDKVKIMQENWIGKSSGAEVVFRVEGSGEEIPVFTTRPDTLYGVTYLVLAPEHPLVEKLTAGTPYEGPVEEFVQAARYLSALDRTATEKEKEGLFTGAYAINPVNNERVPIWIANYVLMEYGTGAVMGVPAHDQRDFEFARKYDLPVKVVIRPASSELPAGELAAAYVEDGIMVNSGPFNGLPNREGIQKVTEYLESIGRGRARVNYRLRDWLISRQRYWGAPIPMIYCDQCGIVPVPEEDLPVILPEGVEFRPTGESPLTYCPEFVNTTCPRCGGPARRETDTMDTFVCSSWYFLRYTSPHSQDRAFERDKVDYWMNVDQYIGGVEHAILHLMYARFFTKALHDFGLVGVEEPFQNLLTQGMVLKDGSKMSKSKGNIVSPEEIINRYGADTARLFILFAAPPERDLEWSDQGVEGCYRFLNRVWRLVGSYADAVRRAGGSLEIRSHADRELWRLLHATIKKVTEDVEERFNFNTAISAIMELVNGCYRYQDTVPEEEQNLVLMGEVLRKLVTLLAPFAPHITEELWQGLGGQESVHRESWPQYDPEALVEEEITLVIQINGKVKDRMQVPAGLAREKIEELVLNRDKVAALLAGQQVVKVIVVPDKLVNVVARRAS.

Residues 42-52 (PYPSGNLHMGH) carry the 'HIGH' region motif. Positions 582–586 (KMSKS) match the 'KMSKS' region motif. K585 lines the ATP pocket.

This sequence belongs to the class-I aminoacyl-tRNA synthetase family.

Its subcellular location is the cytoplasm. The catalysed reaction is tRNA(Leu) + L-leucine + ATP = L-leucyl-tRNA(Leu) + AMP + diphosphate. This Moorella thermoacetica (strain ATCC 39073 / JCM 9320) protein is Leucine--tRNA ligase.